We begin with the raw amino-acid sequence, 289 residues long: Ferri-bacillibactin esterase BesA (289 aa).

Active-site charge relay system residues include Ser-163, Glu-225, and His-263.

It belongs to the esterase D family.

The protein localises to the cytoplasm. In terms of biological role, catalyzes the hydrolysis of the trilactone cycle of ferri-bacillibactin (ferri-BB) complex, leading to the formation of bacillibactin monomers and to cytosolic iron release, thus making iron available for metabolic use. Can also hydrolyze bacillibactin (BB), however the catalytic efficiency for ferri-BB hydrolysis is much higher than for BB. The polypeptide is Ferri-bacillibactin esterase BesA (besA) (Bacillus subtilis (strain 168)).